The primary structure comprises 583 residues: 2-succinyl-5-enolpyruvyl-6-hydroxy-3-cyclohexene-1-carboxylate synthase (583 aa).

Belongs to the TPP enzyme family. MenD subfamily. As to quaternary structure, homodimer. The cofactor is Mg(2+). It depends on Mn(2+) as a cofactor. Requires thiamine diphosphate as cofactor.

The enzyme catalyses isochorismate + 2-oxoglutarate + H(+) = 5-enolpyruvoyl-6-hydroxy-2-succinyl-cyclohex-3-ene-1-carboxylate + CO2. It functions in the pathway quinol/quinone metabolism; 1,4-dihydroxy-2-naphthoate biosynthesis; 1,4-dihydroxy-2-naphthoate from chorismate: step 2/7. The protein operates within quinol/quinone metabolism; menaquinone biosynthesis. Functionally, catalyzes the thiamine diphosphate-dependent decarboxylation of 2-oxoglutarate and the subsequent addition of the resulting succinic semialdehyde-thiamine pyrophosphate anion to isochorismate to yield 2-succinyl-5-enolpyruvyl-6-hydroxy-3-cyclohexene-1-carboxylate (SEPHCHC). This Roseiflexus sp. (strain RS-1) protein is 2-succinyl-5-enolpyruvyl-6-hydroxy-3-cyclohexene-1-carboxylate synthase.